We begin with the raw amino-acid sequence, 362 residues long: MAQIFNFSSGPAMLPAEVLKQAQQELRDWNGLGTSVMEVSHRGKEFIQVAEEAEKDFRDLLNVPSNYKVLFCHGGGRGQFAAVPLNILGDKTTADYVDAGYWAASAIKEAKKYCTPNVFDAKVTVDGLRAVKPMREWQLSDNAAYMHYCPNETIDGIAIDETPDFGKDVVVAADFSSTILSRPIDVSRYGVIYAGAQKNIGPAGLTIVIVREDLLGKANIACPSILDYSIFNDNGSMFNTPPTFAWYLSGLVFKWLKANGGVAEMDKINQQKAELLYGVIDNSDFYRNDVAKANRSRMNVPFQLADSALDKLFLEESFAAGLHALKGHRVVGGMRASIYNAMPLEGVKALTDFMVEFERRHG.

Residues serine 9 and arginine 42 each contribute to the L-glutamate site. Residues 76 to 77 (GR), tryptophan 102, threonine 153, aspartate 174, and glutamine 197 contribute to the pyridoxal 5'-phosphate site. Lysine 198 carries the post-translational modification N6-(pyridoxal phosphate)lysine. 239–240 (NT) is a pyridoxal 5'-phosphate binding site.

It belongs to the class-V pyridoxal-phosphate-dependent aminotransferase family. SerC subfamily. As to quaternary structure, homodimer. Pyridoxal 5'-phosphate serves as cofactor.

The protein resides in the cytoplasm. It catalyses the reaction O-phospho-L-serine + 2-oxoglutarate = 3-phosphooxypyruvate + L-glutamate. The catalysed reaction is 4-(phosphooxy)-L-threonine + 2-oxoglutarate = (R)-3-hydroxy-2-oxo-4-phosphooxybutanoate + L-glutamate. The protein operates within amino-acid biosynthesis; L-serine biosynthesis; L-serine from 3-phospho-D-glycerate: step 2/3. It participates in cofactor biosynthesis; pyridoxine 5'-phosphate biosynthesis; pyridoxine 5'-phosphate from D-erythrose 4-phosphate: step 3/5. Functionally, catalyzes the reversible conversion of 3-phosphohydroxypyruvate to phosphoserine and of 3-hydroxy-2-oxo-4-phosphonooxybutanoate to phosphohydroxythreonine. The sequence is that of Phosphoserine aminotransferase from Shigella boydii serotype 4 (strain Sb227).